The following is a 71-amino-acid chain: Exodeoxyribonuclease 7 small subunit (71 aa).

This sequence belongs to the XseB family. As to quaternary structure, heterooligomer composed of large and small subunits.

It is found in the cytoplasm. It carries out the reaction Exonucleolytic cleavage in either 5'- to 3'- or 3'- to 5'-direction to yield nucleoside 5'-phosphates.. Its function is as follows. Bidirectionally degrades single-stranded DNA into large acid-insoluble oligonucleotides, which are then degraded further into small acid-soluble oligonucleotides. This is Exodeoxyribonuclease 7 small subunit from Clostridium botulinum (strain ATCC 19397 / Type A).